A 576-amino-acid chain; its full sequence is Proline--tRNA ligase (576 aa).

Belongs to the class-II aminoacyl-tRNA synthetase family. ProS type 1 subfamily. In terms of assembly, homodimer.

The protein localises to the cytoplasm. It carries out the reaction tRNA(Pro) + L-proline + ATP = L-prolyl-tRNA(Pro) + AMP + diphosphate. In terms of biological role, catalyzes the attachment of proline to tRNA(Pro) in a two-step reaction: proline is first activated by ATP to form Pro-AMP and then transferred to the acceptor end of tRNA(Pro). As ProRS can inadvertently accommodate and process non-cognate amino acids such as alanine and cysteine, to avoid such errors it has two additional distinct editing activities against alanine. One activity is designated as 'pretransfer' editing and involves the tRNA(Pro)-independent hydrolysis of activated Ala-AMP. The other activity is designated 'posttransfer' editing and involves deacylation of mischarged Ala-tRNA(Pro). The misacylated Cys-tRNA(Pro) is not edited by ProRS. The chain is Proline--tRNA ligase from Trichlorobacter lovleyi (strain ATCC BAA-1151 / DSM 17278 / SZ) (Geobacter lovleyi).